A 241-amino-acid polypeptide reads, in one-letter code: Anti-Pycsar protein Apyc1 (241 aa).

Residues 17 to 215 (DNNNALLEQD…SVQKKTWLMH (199 aa)) form a beta-lactamase-like region. Zn(2+) contacts are provided by His59, His61, Asp63, His64, His142, Asp162, and His215.

This sequence belongs to the nuclease anti-Pycsar protein Apyc1 family. Homodimer. The cofactor is Zn(2+).

The catalysed reaction is 3',5'-cyclic CMP + H2O = CMP + H(+). It carries out the reaction 3',5'-cyclic UMP + H2O = UMP + H(+). Its function is as follows. Counteracts the endogenous Pycsar antiviral defense system. Phosphodiesterase that enables metal-dependent hydrolysis of host cyclic nucleotide Pycsar defense signals such as cCMP and cUMP. This Paenibacillus harenae protein is Anti-Pycsar protein Apyc1.